A 676-amino-acid chain; its full sequence is Probable potassium transport system protein Kup (676 aa).

The next 12 helical transmembrane spans lie at 14-34, 56-76, 97-117, 142-162, 173-193, 219-239, 252-272, 296-316, 345-365, 376-396, 402-422, and 429-449; these read GLLI…LYVM, ISLI…IIAL, AAWL…DGTL, VSNQ…LFSI, AFGP…LINI, AGFA…ALYS, SWPF…VWIL, LASI…LITG, IYIP…VLFF, GLSI…WLVL, LANL…MGSS, and GGYV…VWYF.

The protein belongs to the HAK/KUP transporter (TC 2.A.72) family.

The protein resides in the cell membrane. The enzyme catalyses K(+)(in) + H(+)(in) = K(+)(out) + H(+)(out). Transport of potassium into the cell. Likely operates as a K(+):H(+) symporter. In Lactobacillus delbrueckii subsp. bulgaricus (strain ATCC BAA-365 / Lb-18), this protein is Probable potassium transport system protein Kup.